The following is an 804-amino-acid chain: Elongation factor G, mitochondrial (804 aa).

The transit peptide at 1-9 (MVRPAQVRA) directs the protein to the mitochondrion. The region spanning 103–389 (SKVRNIGIAA…GVCDYLPNPS (287 aa)) is the tr-type G domain. GTP is bound by residues 112–119 (AHIDSGKT), 187–191 (DTPGH), and 241–244 (NKMD).

Belongs to the TRAFAC class translation factor GTPase superfamily. Classic translation factor GTPase family. EF-G/EF-2 subfamily.

The protein localises to the mitochondrion. The protein operates within protein biosynthesis; polypeptide chain elongation. Functionally, mitochondrial GTPase that catalyzes the GTP-dependent ribosomal translocation step during translation elongation. During this step, the ribosome changes from the pre-translocational (PRE) to the post-translocational (POST) state as the newly formed A-site-bound peptidyl-tRNA and P-site-bound deacylated tRNA move to the P and E sites, respectively. Catalyzes the coordinated movement of the two tRNA molecules, the mRNA and conformational changes in the ribosome. In Talaromyces stipitatus (strain ATCC 10500 / CBS 375.48 / QM 6759 / NRRL 1006) (Penicillium stipitatum), this protein is Elongation factor G, mitochondrial (mef1).